The following is a 544-amino-acid chain: MAAKEIKYDSVARDKVMKGVDTLANAVKVTLGPRGRNVVIEKAWGGPTITKDGVTVAKEIELEDKFENMGAQMVREVASKTSDMAGDGTTTATILAQAIYREGTKLAAAGMNPMSLKRGIDKSVQLVIDELKKISKDIRDKKEITQVGTISANNDNTIGEIISEAMEKVGKEGVITVEEAKGMETTLEIVEGMQFDRGYVSPYFVTDPEKMEVVMEDPYILLYDKKISVMQDLVPILEQIARSGRPMLIVSEDLEGEALATLVVNNIRGTLKCAAVKAPGFGDRRKAMLEDIAILTGGKVVSEELGIKLDSITLTDLGTCKRLHITKDNTTIVDGAGSQADIEGRVKQIRTQIEETTSDYDREKLQERLAKLVGGVAVIKVGAATEIEMKEKKARVEDALHATRAAVEEGIVPGGGVALLRTLPALAGMDLPDDERPGLNIVKRAVEEPMRQIAANAGFEGSIVVEKVKENTGNFGFNADTEKYVDMMEAGIIDPTKVVRFALQNAASVASLLLTTEAMIAEAPKKKGAGMPGGMPPDMGDMEY.

Residues 30–33 (TLGP), lysine 51, 87–91 (DGTTT), glycine 415, and aspartate 494 contribute to the ATP site.

The protein belongs to the chaperonin (HSP60) family. As to quaternary structure, forms a cylinder of 14 subunits composed of two heptameric rings stacked back-to-back. Interacts with the co-chaperonin GroES.

The protein resides in the cytoplasm. The enzyme catalyses ATP + H2O + a folded polypeptide = ADP + phosphate + an unfolded polypeptide.. Its function is as follows. Together with its co-chaperonin GroES, plays an essential role in assisting protein folding. The GroEL-GroES system forms a nano-cage that allows encapsulation of the non-native substrate proteins and provides a physical environment optimized to promote and accelerate protein folding. The polypeptide is Chaperonin GroEL 1 (Syntrophus aciditrophicus (strain SB)).